We begin with the raw amino-acid sequence, 129 residues long: Defensin-like protein 182 (129 aa).

An N-terminal signal peptide occupies residues 1–26 (METVTSLVFIVNLLIIFTSVVNQARG). 8 cysteine pairs are disulfide-bonded: cysteine 29–cysteine 70, cysteine 36–cysteine 55, cysteine 39–cysteine 64, cysteine 43–cysteine 66, cysteine 83–cysteine 129, cysteine 94–cysteine 114, cysteine 99–cysteine 123, and cysteine 103–cysteine 125.

This sequence belongs to the DEFL family.

It is found in the secreted. In terms of biological role, confers broad-spectrum resistance to pathogens. This Arabidopsis thaliana (Mouse-ear cress) protein is Defensin-like protein 182 (PDF3.2).